Here is a 245-residue protein sequence, read N- to C-terminus: NAD-dependent protein deacylase (245 aa).

The Deacetylase sirtuin-type domain occupies 1–245 (MEAVWESARI…RLSRAMGIDI (245 aa)). Residue 22–41 (GAGISAESGIPTFRGKDGLW) participates in NAD(+) binding. Positions 66 and 69 each coordinate substrate. NAD(+) is bound at residue 100-103 (QNVD). The Proton acceptor role is filled by His-118. Zn(2+) is bound by residues Cys-126, Cys-129, Cys-146, and Cys-149. NAD(+) contacts are provided by residues 186–188 (GTS), 212–214 (NPE), and Met-241.

It belongs to the sirtuin family. Class III subfamily. The cofactor is Zn(2+).

It is found in the cytoplasm. The catalysed reaction is N(6)-acetyl-L-lysyl-[protein] + NAD(+) + H2O = 2''-O-acetyl-ADP-D-ribose + nicotinamide + L-lysyl-[protein]. It catalyses the reaction N(6)-succinyl-L-lysyl-[protein] + NAD(+) + H2O = 2''-O-succinyl-ADP-D-ribose + nicotinamide + L-lysyl-[protein]. Functionally, NAD-dependent lysine deacetylase and desuccinylase that specifically removes acetyl and succinyl groups on target proteins. Modulates the activities of several proteins which are inactive in their acylated form. Deacetylates the N-terminal lysine residue of Alba, the major archaeal chromatin protein and that, in turn, increases Alba's DNA binding affinity, thereby repressing transcription. In Aeropyrum pernix (strain ATCC 700893 / DSM 11879 / JCM 9820 / NBRC 100138 / K1), this protein is NAD-dependent protein deacylase.